Reading from the N-terminus, the 812-residue chain is Fibrous sheath CABYR-binding protein (812 aa).

The segment at 1 to 66 (MEESDEPEQP…SIGNIPGGKA (66 aa)) is disordered. A phosphoserine mark is found at Ser-25, Ser-57, Ser-125, Ser-133, Ser-184, and Ser-273. 4 disordered regions span residues 269 to 333 (IQAP…PKGT), 367 to 388 (DSGR…PPLS), 424 to 547 (FEDQ…PPSL), and 672 to 741 (PAEE…PSVK). The span at 275-286 (AKETSAAETTAK) shows a compositional bias: low complexity. The span at 488–501 (EVPPLPTEEWPLPP) shows a compositional bias: pro residues. The span at 502–513 (VTEESPAEVTPP) shows a compositional bias: low complexity. Residues 514–528 (ETEEGPIEPAEEGPE) are compositionally biased toward acidic residues.

Interacts with CABYR.

The protein resides in the cell projection. It localises to the cilium. The protein localises to the flagellum. Its function is as follows. May be involved in the later stages of fibrous sheath biogenesis. Binds calcium. The chain is Fibrous sheath CABYR-binding protein from Rattus norvegicus (Rat).